An 883-amino-acid chain; its full sequence is MQKIMHISVLLSPILWGLIFGVSSNSIQIGGLFPRGADQEYSAFRVGMVQFSTSEFRLTPHIDNLEVANSFAVTNAFCSQFSRGVYAIFGFYDKKSVNTITSFCGTLHVSFITPSFPTDGTHPFVIQMRPDLKGALLSLIEYYQWDKFAYLYDSDRGLSTLQAVLDSAAEKKWQVTAINVGNINNDKKDEMYRSLFQDLELKKERRVILDCERDKVNDIVDQVITIGKHVKGYHYIIANLGFTDGDLLKIQFGGANVSGFQIVDYDDSLVSKFIERWSTLEEKEYPGAHTTTIKYTSALTYDAVQVMTEAFRNLRKQRIEISRRGNAGDCLANPAVPWGQGVEIERALKQVQVEGLSGNIKFDQNGKRINYTINIMELKTNGPRKIGYWSEVDKMVVTLTELPSGNDTSGLENKTVVVTTILESPYVMMKKNHEMLEGNERYEGYCVDLAAEIAKHCGFKYKLTIVGDGKYGARDADTKIWNGMVGELVYGKADIAIAPLTITLVREEVIDFSKPFMSLGISIMIKKPQKSKPGVFSFLDPLAYEIWMCIVFAYIGVSVVLFLVSRFSPYEWHTEEFEDGRETQSSESTNEFGIFNSLWFSLGAFMRQGCDISPRSLSGRIVGGVWWFFTLIIISSYTANLAAFLTVERMVSPIESAEDLSKQTEIAYGTLDSGSTKEFFRRSKIAVFDKMWTYMRSAEPSVFVRTTAEGVARVRKSKGKYAYLLESTMNEYIEQRKPCDTMKVGGNLDSKGYGIATPKGSSLGNAVNLAVLKLNEQGLLDKLKNKWWYDKGECGSGGGDSKEKTSALSLSNVAGVFYILVGGLGLAMLVALIEFCYKSRAEAKRMKVAKNAQNINPSSSQNSQNFATYKEGYNVYGIESVKI.

Residues 1–24 form the signal peptide; sequence MQKIMHISVLLSPILWGLIFGVSS. Topologically, residues 25–543 are extracellular; that stretch reads NSIQIGGLFP…GVFSFLDPLA (519 aa). An intrachain disulfide couples C78 to C330. Residues N256, N370, N406, and N413 are each glycosylated (N-linked (GlcNAc...) asparagine). P499, T501, and R506 together coordinate L-glutamate. Residues 544 to 564 form a helical membrane-spanning segment; it reads YEIWMCIVFAYIGVSVVLFLV. Over 565–591 the chain is Cytoplasmic; sequence SRFSPYEWHTEEFEDGRETQSSESTNE. An intramembrane region (helical; Pore-forming) is located at residues 592-607; the sequence is FGIFNSLWFSLGAFMR. Residues 608–610 lie within the membrane without spanning it; the sequence is QGC. A lipid anchor (S-palmitoyl cysteine) is attached at C610. Over 611-616 the chain is Cytoplasmic; that stretch reads DISPRS. Residues 617 to 637 form a helical membrane-spanning segment; the sequence is LSGRIVGGVWWFFTLIIISSY. Topologically, residues 638–812 are extracellular; that stretch reads TANLAAFLTV…EKTSALSLSN (175 aa). Positions 675 and 676 each coordinate L-glutamate. S683 is subject to Phosphoserine; by PKC. S717 bears the Phosphoserine; by PKG mark. E726 is a binding site for L-glutamate. C739 and C794 form a disulfide bridge. The chain crosses the membrane as a helical span at residues 813–833; that stretch reads VAGVFYILVGGLGLAMLVALI. Residues 834-883 are Cytoplasmic-facing; sequence EFCYKSRAEAKRMKVAKNAQNINPSSSQNSQNFATYKEGYNVYGIESVKI. C836 carries the S-palmitoyl cysteine lipid modification. S860 and S863 each carry phosphoserine. A required for interaction with IQSEC1 region spans residues 867–877; sequence ATYKEGYNVYG. At Y876 the chain carries Phosphotyrosine. Residue S880 is modified to Phosphoserine.

It belongs to the glutamate-gated ion channel (TC 1.A.10.1) family. GRIA2 subfamily. In terms of assembly, homotetramer or heterotetramer of pore-forming glutamate receptor subunits. Tetramers may be formed by the dimerization of dimers. May interact with MPP4. Forms a ternary complex with GRIP1 and CSPG4. Interacts with ATAD1 in an ATP-dependent manner. ATAD1-catalyzed ATP hydrolysis disrupts binding to ATAD1 and to GRIP1 and leads to AMPAR complex disassembly. Interacts with GRIP1 and GRIP2. Interacts with NSF via its C-terminus. Isoform 1, but not isoform 3, interacts with PICK1. Interacts with CACNG2. Interacts with GRIA1 and SYNDIG1. Part of a complex containing GRIA2, NSF and NAPA and/or NAPB. Interacts with SNX27 (via PDZ domain); the interaction is required for recycling to the plasma membrane when endocytosed and prevent degradation in lysosomes. Interacts with LRFN1. Found in a complex with GRIA1, GRIA3, GRIA4, CNIH2, CNIH3, CACNG2, CACNG3, CACNG4, CACNG5, CACNG7 and CACNG8. Interacts with CACNG5. Interacts with OLFM2. Interacts with AP4B1, AP4E1 and AP4M1; probably indirect it mediates the somatodendritic localization of GRIA2 in neurons. Forms a complex with GRIP1, NSG1 and STX12; controls the intracellular fate of AMPAR and the endosomal sorting of the GRIA2 subunit toward recycling and membrane targeting. Interacts with IQSEC1; the interaction is required for ARF6 activation. Interacts (heterotetramer form) with CNIH2 and CNIH3; this interaction promotes expression at the plasma membrane and extensively modulates their gating properties by slowing deactivation and desensitization kinetics. Phosphorylation at Tyr-876 is required for interaction with IQSEC1 and ARF6 activation, which in turn triggers AMPAR internalization for persistent synaptic depression. Post-translationally, palmitoylated. Depalmitoylated upon L-glutamate stimulation. ZDHHC3/GODZ specifically palmitoylates Cys-610, which leads to Golgi retention and decreased cell surface expression. In contrast, Cys-836 palmitoylation does not affect cell surface expression but regulates stimulation-dependent endocytosis. In terms of processing, N-glycosylated. Ubiquitinated by RNF167, leading to its degradation.

Its subcellular location is the cell membrane. It is found in the postsynaptic cell membrane. The protein localises to the postsynaptic density membrane. It catalyses the reaction Ca(2+)(in) = Ca(2+)(out). It carries out the reaction Na(+)(in) = Na(+)(out). In terms of biological role, ionotropic glutamate receptor that functions as a ligand-gated cation channel, gated by L-glutamate and glutamatergic agonists such as alpha-amino-3-hydroxy-5-methyl-4-isoxazolepropionic acid (AMPA), quisqualic acid, and kainic acid. L-glutamate acts as an excitatory neurotransmitter at many synapses in the central nervous system and plays an important role in fast excitatory synaptic transmission. Binding of the excitatory neurotransmitter L-glutamate induces a conformation change, leading to the opening of the cation channel, and thereby converts the chemical signal to an electrical impulse upon entry of monovalent and divalent cations such as sodium and calcium. The receptor then desensitizes rapidly and enters in a transient inactive state, characterized by the presence of bound agonist. In the presence of CACNG4 or CACNG7 or CACNG8, shows resensitization which is characterized by a delayed accumulation of current flux upon continued application of L-glutamate. Through complex formation with NSG1, GRIP1 and STX12 controls the intracellular fate of AMPAR and the endosomal sorting of the GRIA2 subunit toward recycling and membrane targeting. This Macaca fascicularis (Crab-eating macaque) protein is Glutamate receptor 2.